A 635-amino-acid chain; its full sequence is Biosynthetic arginine decarboxylase (635 aa).

N6-(pyridoxal phosphate)lysine is present on lysine 100. 282-292 (LDIGGGLGVDY) is a binding site for substrate.

Belongs to the Orn/Lys/Arg decarboxylase class-II family. SpeA subfamily. Mg(2+) serves as cofactor. It depends on pyridoxal 5'-phosphate as a cofactor.

The enzyme catalyses L-arginine + H(+) = agmatine + CO2. The protein operates within amine and polyamine biosynthesis; agmatine biosynthesis; agmatine from L-arginine: step 1/1. Functionally, catalyzes the biosynthesis of agmatine from arginine. This chain is Biosynthetic arginine decarboxylase, found in Trichlorobacter lovleyi (strain ATCC BAA-1151 / DSM 17278 / SZ) (Geobacter lovleyi).